The primary structure comprises 356 residues: Cobalt-precorrin-5B C(1)-methyltransferase (356 aa).

The protein belongs to the CbiD family.

It catalyses the reaction Co-precorrin-5B + S-adenosyl-L-methionine = Co-precorrin-6A + S-adenosyl-L-homocysteine. The protein operates within cofactor biosynthesis; adenosylcobalamin biosynthesis; cob(II)yrinate a,c-diamide from sirohydrochlorin (anaerobic route): step 6/10. Functionally, catalyzes the methylation of C-1 in cobalt-precorrin-5B to form cobalt-precorrin-6A. The protein is Cobalt-precorrin-5B C(1)-methyltransferase of Citrifermentans bemidjiense (strain ATCC BAA-1014 / DSM 16622 / JCM 12645 / Bem) (Geobacter bemidjiensis).